We begin with the raw amino-acid sequence, 131 residues long: Large ribosomal subunit protein bL17 (131 aa).

Belongs to the bacterial ribosomal protein bL17 family. In terms of assembly, part of the 50S ribosomal subunit. Contacts protein L32.

This is Large ribosomal subunit protein bL17 from Burkholderia ambifaria (strain MC40-6).